Here is a 227-residue protein sequence, read N- to C-terminus: Cytochrome c oxidase subunit 2 (227 aa).

The Mitochondrial intermembrane segment spans residues 1 to 14 (MAYSFQLGLQDATS). A helical membrane pass occupies residues 15–45 (PIMEELMNFHDHTLMIVFLISSLVLYIISLM). Residues 46 to 59 (LTTKLTHTSTMDAQ) lie on the Mitochondrial matrix side of the membrane. A helical membrane pass occupies residues 60–87 (EVETIWTILPAVILIMIALPSLRILYMM). At 88 to 227 (DEINNPVLTV…HFENWSASMI (140 aa)) the chain is on the mitochondrial intermembrane side. Residues His161, Cys196, Glu198, Cys200, His204, and Met207 each contribute to the Cu cation site. Glu198 lines the Mg(2+) pocket.

Belongs to the cytochrome c oxidase subunit 2 family. Component of the cytochrome c oxidase (complex IV, CIV), a multisubunit enzyme composed of 14 subunits. The complex is composed of a catalytic core of 3 subunits MT-CO1, MT-CO2 and MT-CO3, encoded in the mitochondrial DNA, and 11 supernumerary subunits COX4I, COX5A, COX5B, COX6A, COX6B, COX6C, COX7A, COX7B, COX7C, COX8 and NDUFA4, which are encoded in the nuclear genome. The complex exists as a monomer or a dimer and forms supercomplexes (SCs) in the inner mitochondrial membrane with NADH-ubiquinone oxidoreductase (complex I, CI) and ubiquinol-cytochrome c oxidoreductase (cytochrome b-c1 complex, complex III, CIII), resulting in different assemblies (supercomplex SCI(1)III(2)IV(1) and megacomplex MCI(2)III(2)IV(2)). Found in a complex with TMEM177, COA6, COX18, COX20, SCO1 and SCO2. Interacts with TMEM177 in a COX20-dependent manner. Interacts with COX20. Interacts with COX16. Requires Cu cation as cofactor.

The protein localises to the mitochondrion inner membrane. It catalyses the reaction 4 Fe(II)-[cytochrome c] + O2 + 8 H(+)(in) = 4 Fe(III)-[cytochrome c] + 2 H2O + 4 H(+)(out). In terms of biological role, component of the cytochrome c oxidase, the last enzyme in the mitochondrial electron transport chain which drives oxidative phosphorylation. The respiratory chain contains 3 multisubunit complexes succinate dehydrogenase (complex II, CII), ubiquinol-cytochrome c oxidoreductase (cytochrome b-c1 complex, complex III, CIII) and cytochrome c oxidase (complex IV, CIV), that cooperate to transfer electrons derived from NADH and succinate to molecular oxygen, creating an electrochemical gradient over the inner membrane that drives transmembrane transport and the ATP synthase. Cytochrome c oxidase is the component of the respiratory chain that catalyzes the reduction of oxygen to water. Electrons originating from reduced cytochrome c in the intermembrane space (IMS) are transferred via the dinuclear copper A center (CU(A)) of subunit 2 and heme A of subunit 1 to the active site in subunit 1, a binuclear center (BNC) formed by heme A3 and copper B (CU(B)). The BNC reduces molecular oxygen to 2 water molecules using 4 electrons from cytochrome c in the IMS and 4 protons from the mitochondrial matrix. The chain is Cytochrome c oxidase subunit 2 (MT-CO2) from Praomys jacksoni (African forest rat).